The chain runs to 317 residues: Ribosomal RNA small subunit methyltransferase H (317 aa).

Residues 36 to 38 (GGH), D56, F80, D102, and Q109 each bind S-adenosyl-L-methionine.

This sequence belongs to the methyltransferase superfamily. RsmH family.

The protein resides in the cytoplasm. It catalyses the reaction cytidine(1402) in 16S rRNA + S-adenosyl-L-methionine = N(4)-methylcytidine(1402) in 16S rRNA + S-adenosyl-L-homocysteine + H(+). In terms of biological role, specifically methylates the N4 position of cytidine in position 1402 (C1402) of 16S rRNA. The polypeptide is Ribosomal RNA small subunit methyltransferase H (Baumannia cicadellinicola subsp. Homalodisca coagulata).